The chain runs to 643 residues: Threonine--tRNA ligase (643 aa).

The TGS domain occupies 1 to 61 (MIKITLKDGS…NEDSSLEICT (61 aa)). A catalytic region spans residues 240–540 (DHNKLGRELG…LIEKYAGALP (301 aa)). 3 residues coordinate Zn(2+): Cys335, His386, and His517.

This sequence belongs to the class-II aminoacyl-tRNA synthetase family. In terms of assembly, homodimer. Requires Zn(2+) as cofactor.

The protein localises to the cytoplasm. The enzyme catalyses tRNA(Thr) + L-threonine + ATP = L-threonyl-tRNA(Thr) + AMP + diphosphate + H(+). Catalyzes the attachment of threonine to tRNA(Thr) in a two-step reaction: L-threonine is first activated by ATP to form Thr-AMP and then transferred to the acceptor end of tRNA(Thr). Also edits incorrectly charged L-seryl-tRNA(Thr). The sequence is that of Threonine--tRNA ligase from Clostridium perfringens (strain SM101 / Type A).